The primary structure comprises 88 residues: HssA/B-like protein 12 (88 aa).

This sequence belongs to the hssA/B family.

This Dictyostelium discoideum (Social amoeba) protein is HssA/B-like protein 12 (hssl12).